The chain runs to 402 residues: Phosphoglycerate kinase (402 aa).

Substrate is bound by residues Asp-21–Asn-23, Arg-36, His-59–Arg-62, Arg-118, and Arg-151. Residues Lys-201, Gly-293, Glu-324, and Gly-353–Ser-356 contribute to the ATP site.

The protein belongs to the phosphoglycerate kinase family. In terms of assembly, monomer.

It localises to the cytoplasm. The enzyme catalyses (2R)-3-phosphoglycerate + ATP = (2R)-3-phospho-glyceroyl phosphate + ADP. It participates in carbohydrate degradation; glycolysis; pyruvate from D-glyceraldehyde 3-phosphate: step 2/5. This Thermosipho africanus (strain TCF52B) protein is Phosphoglycerate kinase.